Here is a 253-residue protein sequence, read N- to C-terminus: Kojic acid related protein 1 (253 aa).

3 consecutive transmembrane segments (helical) span residues 23 to 43, 53 to 73, and 117 to 137; these read PIKF…FILI, IFYP…YIVS, and ALFG…IVSV. Residues 174-253 form a disordered region; that stretch reads FPMMSPALPS…PPPPKKAAKV (80 aa). Composition is skewed to polar residues over residues 184–200 and 226–240; these read GGTT…SPEF and QQES…NQPQ. The segment covering 242–253 has biased composition (pro residues); sequence YFPPPPKKAAKV.

Its subcellular location is the membrane. In terms of biological role, involved in mycelium growth and repression of conidia formation by affecting the expression of brlA and abaA. Acts as a negative regulation factor for kojic acid production through affecting the expression of kojA, kojR and kojT. This Aspergillus oryzae (strain ATCC 42149 / RIB 40) (Yellow koji mold) protein is Kojic acid related protein 1.